Consider the following 118-residue polypeptide: UPF0342 protein BAMEG_3696 (118 aa).

The protein belongs to the UPF0342 family.

The chain is UPF0342 protein BAMEG_3696 from Bacillus anthracis (strain CDC 684 / NRRL 3495).